We begin with the raw amino-acid sequence, 22 residues long: Mu-conotoxin KIIIB (22 aa).

The propeptide occupies 1–2 (KR). Disulfide bonds link Cys5–Cys13, Cys5–Cys19, Cys5–Cys20, Cys6–Cys13, Cys6–Cys19, Cys8–Cys19, and Cys8–Cys20. 2 pharmacophore key residues regions span residues 14-16 (RDH) and 18-19 (RC). Cys20 carries the post-translational modification Cysteine amide.

Belongs to the conotoxin M superfamily. In terms of assembly, monomer. Toxins with three different disulfide connectivities have been synthesized. The conotoxin mu-KIIIA-P1 shows the connectivity C1-C5, C2-C4, and C3-C6, whereas mu-KIIIA-P2 shows the connectivity C1-C6, C2-C4, and C3-C5. The conotoxin mu-KIIIA-N has the 'native' fold of the mu-conotoxin family (C1-C4, C2-C5, and C3-C6). Mu-KIIIA-P1 and mu-KIIIA-P2 are obtained by both thermodynamic oxidative folding and regioselective synthesis. Mu-KIIIA-P1 is the major oxidative folding product. Mu-KIIIA-N is only obtained by regioselective synthesis. As to expression, expressed by the venom duct.

It is found in the secreted. Functionally, mu-conotoxin KIIIA-P1: mu-conotoxins block voltage-gated sodium channels (Nav). This toxin potently blocks Nav1.2/SCN2A (IC(50)5-124 nM), Nav1.4/SCN4A (IC(50)=20-90 nM), and Nav1.7/SCN9A (IC(50)=290-413 nM). It moderately blocks Nav1.1/SCN1A, and mNav1.6/SCN8A. It also shows a very low activity on Nav1.3/SCN3A. This toxin binds a microsite within the pore different from the tetrodotoxin binding site 1 (tested on Nav1.2). The block is partial, with a residual current that can be completely blocked by TTX. The toxin probably docks at a more superficial site in the outer vestibule of the channel than does TTX. On rNav1.2/SCN2A, it produces a block that is only partially reversible. The block of Nav1.7 is modified when beta-subunits are coexpressed with the alpha subunit. Hence, blocks of channels containing beta-1 and beta-3 subunits are more potent (compared to channels without beta subunits), whereas blocks of channels containing beta-2 and beta-4 subunits are less potent (compared to channels without beta subunits). Mu-conotoxin KIIIA-P2: This toxin potently blocks Nav1.2/SCN2A (Kd=230 nM, IC(50)=1.37 uM) and Nav1.4/SCN4A (Kd=830 nM, IC(50)=2 uM). It also moderately blocks Nav1.7/SCN9A (Kd=1.57 uM, IC(50)=5.4 uM). In addition, this toxin may also inhibit other sodium channels, as does Mu-conotoxin KIIIA-P1. In terms of biological role, mu-conotoxin KIIIA-N: This toxin moderately blocks Nav1.2/SCN2A (IC(50)=875 nM), Nav1.4/SCN4A (IC(50)=472 nM), and Nav1.7/SCN9A (IC(50)=887 nM). Its function is as follows. Mu-conotoxin KIIIB-P1: This toxin potently blocks Nav1.2/SCN2A (Kd=470 nM). In addition, this toxin may also inhibit other sodium channels, as does Mu-conotoxin KIIIA-P1. Functionally, mu-conotoxin KIIIB-P2: This toxin potently blocks Nav1.2/SCN2A (Kd=26 nM). In addition, this toxin may also inhibit other sodium channels, as does Mu-conotoxin KIIIA-P1. The protein is Mu-conotoxin KIIIB of Conus kinoshitai (Kinoshita's cone).